Consider the following 431-residue polypeptide: Probable pectate lyase 1 (431 aa).

Residues 1 to 20 form the signal peptide; sequence MAVLPTWLLAMMCLLFFVGA. 3 N-linked (GlcNAc...) asparagine glycosylation sites follow: asparagine 23, asparagine 28, and asparagine 65. Ca(2+) contacts are provided by aspartate 227, aspartate 251, and aspartate 255. Arginine 307 is an active-site residue.

Belongs to the polysaccharide lyase 1 family. Requires Ca(2+) as cofactor. Expressed in flowers, but not in leaves.

It catalyses the reaction Eliminative cleavage of (1-&gt;4)-alpha-D-galacturonan to give oligosaccharides with 4-deoxy-alpha-D-galact-4-enuronosyl groups at their non-reducing ends.. The protein operates within glycan metabolism; pectin degradation; 2-dehydro-3-deoxy-D-gluconate from pectin: step 2/5. The chain is Probable pectate lyase 1 from Arabidopsis thaliana (Mouse-ear cress).